We begin with the raw amino-acid sequence, 434 residues long: Enolase (434 aa).

Position 163 (Gln163) interacts with (2R)-2-phosphoglycerate. The active-site Proton donor is Glu205. Mg(2+)-binding residues include Asp242, Glu291, and Asp318. (2R)-2-phosphoglycerate-binding residues include Lys343, Arg372, Ser373, and Lys394. The active-site Proton acceptor is Lys343.

This sequence belongs to the enolase family. The cofactor is Mg(2+).

The protein localises to the cytoplasm. Its subcellular location is the secreted. The protein resides in the cell surface. It localises to the cell wall. It carries out the reaction (2R)-2-phosphoglycerate = phosphoenolpyruvate + H2O. Its pathway is carbohydrate degradation; glycolysis; pyruvate from D-glyceraldehyde 3-phosphate: step 4/5. Its function is as follows. Catalyzes the reversible conversion of 2-phosphoglycerate (2-PG) into phosphoenolpyruvate (PEP). It is essential for the degradation of carbohydrates via glycolysis. In Streptococcus pneumoniae serotype 2 (strain D39 / NCTC 7466), this protein is Enolase.